A 66-amino-acid chain; its full sequence is U1-theraphotoxin-Cg1b (66 aa).

Positions 1–21 (MKTSALFVIFGLVLLFCNSFA) are cleaved as a signal peptide. A propeptide spanning residues 22 to 29 (AELKTTGR) is cleaved from the precursor. Intrachain disulfides connect C31-C46, C38-C51, and C45-C58.

The protein belongs to the neurotoxin 10 (Hwtx-1) family. 46 (Jztx-7/10/12) subfamily. As to expression, expressed by the venom gland.

The protein localises to the secreted. Functionally, probable ion channel inhibitor. The polypeptide is U1-theraphotoxin-Cg1b (Chilobrachys guangxiensis (Chinese earth tiger tarantula)).